We begin with the raw amino-acid sequence, 460 residues long: Wadjet protein JetA (460 aa).

Functionally, component of antiplasmid transformation system Wadjet type I, composed of JetA, JetB, JetC and JetD. Expression of Wadjet type I in B.subtilis (strain BEST7003) reduces the transformation efficiency of plasmid pHCMC05. This chain is Wadjet protein JetA, found in Bacillus cereus (strain Q1).